We begin with the raw amino-acid sequence, 394 residues long: uncharacterized protein (394 aa).

A run of 11 helical transmembrane segments spans residues 10 to 30 (PALI…NYYA), 50 to 70 (FIVT…VPLG), 79 to 99 (IVSM…SQSL), 100 to 120 (AMMI…QILV), 138 to 158 (TIMS…GLLA), 166 to 186 (VFWV…RGLP), 218 to 238 (LLGC…AFLL), 243 to 263 (FNYS…GALG), 291 to 311 (WLAI…ILVL), 337 to 357 (LTAG…LISA), and 364 to 384 (GWAG…LVWW).

The protein belongs to the major facilitator superfamily.

It is found in the cell inner membrane. This is an uncharacterized protein from Escherichia coli (strain K12).